Here is a 241-residue protein sequence, read N- to C-terminus: MTPEEFRQSLAGQGLNLTDEQMQQFELYYEFLVETNKNLNLTAITEKNEVYLKHFYDSLLLALTVKDLQTEELSLCDVGAGAGFPSLPVKIAFPQLKITIVDSLNKRIKFLQELTQKLNLQDVHFHHARAEEFGGKRSVHRERYDLVTARAVARMSVLSELCLPLAKVGGRFIALKAQKSDEELKNAQKAIEVLGGKVIADYATELPQVHDERHIIVVAKEKETPKKYPRKAGTPAKSPIE.

Residues glycine 79, phenylalanine 84, alanine 130 to glutamate 131, and arginine 150 contribute to the S-adenosyl-L-methionine site.

It belongs to the methyltransferase superfamily. RNA methyltransferase RsmG family.

It is found in the cytoplasm. In terms of biological role, specifically methylates the N7 position of a guanine in 16S rRNA. The chain is Ribosomal RNA small subunit methyltransferase G from Ligilactobacillus salivarius (strain UCC118) (Lactobacillus salivarius).